A 477-amino-acid chain; its full sequence is ATP synthase subunit beta (477 aa).

Residue 163 to 170 (GGAGVGKT) participates in ATP binding.

It belongs to the ATPase alpha/beta chains family. In terms of assembly, F-type ATPases have 2 components, CF(1) - the catalytic core - and CF(0) - the membrane proton channel. CF(1) has five subunits: alpha(3), beta(3), gamma(1), delta(1), epsilon(1). CF(0) has four main subunits: a(1), b(1), b'(1) and c(9-12).

Its subcellular location is the cellular thylakoid membrane. It carries out the reaction ATP + H2O + 4 H(+)(in) = ADP + phosphate + 5 H(+)(out). Functionally, produces ATP from ADP in the presence of a proton gradient across the membrane. The catalytic sites are hosted primarily by the beta subunits. The sequence is that of ATP synthase subunit beta from Synechococcus sp. (strain JA-2-3B'a(2-13)) (Cyanobacteria bacterium Yellowstone B-Prime).